A 277-amino-acid chain; its full sequence is Large ribosomal subunit protein uL2 (277 aa).

Disordered regions lie at residues 36–55 (PLPKKAGRNNQGKLTVRHHG) and 213–277 (WKGI…RKKK).

The protein belongs to the universal ribosomal protein uL2 family. As to quaternary structure, part of the 50S ribosomal subunit. Forms a bridge to the 30S subunit in the 70S ribosome.

Functionally, one of the primary rRNA binding proteins. Required for association of the 30S and 50S subunits to form the 70S ribosome, for tRNA binding and peptide bond formation. It has been suggested to have peptidyltransferase activity; this is somewhat controversial. Makes several contacts with the 16S rRNA in the 70S ribosome. This chain is Large ribosomal subunit protein uL2, found in Staphylococcus aureus (strain bovine RF122 / ET3-1).